The primary structure comprises 156 residues: S-ribosylhomocysteine lyase (156 aa).

The Fe cation site is built by His-56, His-60, and Cys-123.

Belongs to the LuxS family. Homodimer. Fe cation serves as cofactor.

The catalysed reaction is S-(5-deoxy-D-ribos-5-yl)-L-homocysteine = (S)-4,5-dihydroxypentane-2,3-dione + L-homocysteine. Functionally, involved in the synthesis of autoinducer 2 (AI-2) which is secreted by bacteria and is used to communicate both the cell density and the metabolic potential of the environment. The regulation of gene expression in response to changes in cell density is called quorum sensing. Catalyzes the transformation of S-ribosylhomocysteine (RHC) to homocysteine (HC) and 4,5-dihydroxy-2,3-pentadione (DPD). This Staphylococcus epidermidis (strain ATCC 35984 / DSM 28319 / BCRC 17069 / CCUG 31568 / BM 3577 / RP62A) protein is S-ribosylhomocysteine lyase.